We begin with the raw amino-acid sequence, 155 residues long: Small ribosomal subunit protein uS9 (155 aa).

Belongs to the universal ribosomal protein uS9 family.

The polypeptide is Small ribosomal subunit protein uS9 (Rhizobium etli (strain ATCC 51251 / DSM 11541 / JCM 21823 / NBRC 15573 / CFN 42)).